Reading from the N-terminus, the 83-residue chain is Large ribosomal subunit protein bL27 (83 aa).

Residues 1-20 (MAHKKGASSSRNGRDSNPQY) form a disordered region. Residues 7 to 19 (ASSSRNGRDSNPQ) are compositionally biased toward polar residues.

This sequence belongs to the bacterial ribosomal protein bL27 family.

In Bifidobacterium animalis subsp. lactis (strain AD011), this protein is Large ribosomal subunit protein bL27.